The primary structure comprises 239 residues: Uridylate kinase (239 aa).

An ATP-binding site is contributed by 12–15; that stretch reads KLSG. A UMP-binding site is contributed by Gly-53. Residues Gly-54 and Arg-58 each coordinate ATP. UMP contacts are provided by residues Asp-73 and 135–142; that span reads TGSPCFTT. ATP is bound by residues Thr-162, Tyr-168, and Asp-171.

Belongs to the UMP kinase family. As to quaternary structure, homohexamer.

The protein localises to the cytoplasm. The enzyme catalyses UMP + ATP = UDP + ADP. Its pathway is pyrimidine metabolism; CTP biosynthesis via de novo pathway; UDP from UMP (UMPK route): step 1/1. With respect to regulation, inhibited by UTP. Its function is as follows. Catalyzes the reversible phosphorylation of UMP to UDP. In Ruthia magnifica subsp. Calyptogena magnifica, this protein is Uridylate kinase.